A 357-amino-acid polypeptide reads, in one-letter code: Protein-glutamate methylesterase/protein-glutamine glutaminase 1 (357 aa).

The Response regulatory domain occupies 7–125 (RAVIIDDSLL…QFDPEEIGNI (119 aa)). Asp58 carries the post-translational modification 4-aspartylphosphate. The CheB-type methylesterase domain maps to 162-344 (KKSPIQAICI…VEYIEPVTEI (183 aa)). Residues Ser174, His201, and Asp297 contribute to the active site.

This sequence belongs to the CheB family. Phosphorylated by CheA. Phosphorylation of the N-terminal regulatory domain activates the methylesterase activity.

Its subcellular location is the cytoplasm. It catalyses the reaction [protein]-L-glutamate 5-O-methyl ester + H2O = L-glutamyl-[protein] + methanol + H(+). The catalysed reaction is L-glutaminyl-[protein] + H2O = L-glutamyl-[protein] + NH4(+). Its function is as follows. Involved in chemotaxis. Part of a chemotaxis signal transduction system that modulates chemotaxis in response to various stimuli. Catalyzes the demethylation of specific methylglutamate residues introduced into the chemoreceptors (methyl-accepting chemotaxis proteins or MCP) by CheR. Also mediates the irreversible deamidation of specific glutamine residues to glutamic acid. This is Protein-glutamate methylesterase/protein-glutamine glutaminase 1 from Leptospira interrogans serogroup Icterohaemorrhagiae serovar Lai (strain 56601).